We begin with the raw amino-acid sequence, 261 residues long: Anamorsin homolog (261 aa).

An N-terminal SAM-like domain region spans residues 4–134; it reads VQENNQVLYI…EIGSAAKLSL (131 aa). The linker stretch occupies residues 134-173; sequence LGGGANKAKVAAVWKLDVDDDGEAEERIDEDELLDEEDKV. Cys-183, Cys-192, Cys-195, and Cys-197 together coordinate [2Fe-2S] cluster. The segment at 183 to 197 is fe-S binding site A; that stretch reads CGTTGKRKACKDCSC. The [4Fe-4S] cluster site is built by Cys-222, Cys-225, Cys-233, and Cys-236. Short sequence motifs (cx2C motif) lie at residues 222-225 and 233-236; these read CGSC and CATC. Positions 222-236 are fe-S binding site B; the sequence is CGSCYLGDAFRCATC.

It belongs to the anamorsin family. In terms of assembly, monomer. It depends on [2Fe-2S] cluster as a cofactor. The cofactor is [4Fe-4S] cluster.

It localises to the cytoplasm. It is found in the mitochondrion intermembrane space. Its function is as follows. Component of the cytosolic iron-sulfur (Fe-S) protein assembly (CIA) machinery. Required for the maturation of extramitochondrial Fe-S proteins. Part of an electron transfer chain functioning in an early step of cytosolic Fe-S biogenesis, facilitating the de novo assembly of a [4Fe-4S] cluster on the cytosolic Fe-S scaffold complex. Electrons are transferred from NADPH via a FAD- and FMN-containing diflavin oxidoreductase. Together with the diflavin oxidoreductase, also required for the assembly of the diferric tyrosyl radical cofactor of ribonucleotide reductase (RNR), probably by providing electrons for reduction during radical cofactor maturation in the catalytic small subunit. This Culex quinquefasciatus (Southern house mosquito) protein is Anamorsin homolog.